A 476-amino-acid chain; its full sequence is MNILFAVSECVPFVKSGGLADVAGALPKELKKLGVDVRIILPNYSLIPQKLRDGCTLHKVINVPLGWRNQYCGILKGEQDGITYYLIDNEYYFKRDSLYGHYDDGERFSYFSKAVLECIPHLDFEVDVLHSHDWHTAMVNFLLREKYQDNPLYERIKTVYTIHNLQFQGVFPPEVIYDLLELGDEYFHSEQLEFYGNVNFMKGGIIASDQITAVSPTYKEEIQYEFFGEKLDGLLRKYNDKLSGIVNGIDTSVYNPETDSYIKAQYDAESLYEKSENKRALQRYFGLPEKEDTPIISMVTRLTKQKGLDLVRTVFREIMEEDVQCIILGSGDSEYEQFFEWMAYEYPEKVKVYIGFNEELAHQVYAGSDLFLMPSLFEPCGLGQLIALAYGTIPIVRETGGLNDTVHSYDEETGEGNGFSFTNFNAHDMLHTIHRAIEFYHDKPVWEQLVKQAMTEDYSWEQSALAYKELYKSLME.

An ADP-alpha-D-glucose-binding site is contributed by lysine 15.

It belongs to the glycosyltransferase 1 family. Bacterial/plant glycogen synthase subfamily.

The catalysed reaction is [(1-&gt;4)-alpha-D-glucosyl](n) + ADP-alpha-D-glucose = [(1-&gt;4)-alpha-D-glucosyl](n+1) + ADP + H(+). Its pathway is glycan biosynthesis; glycogen biosynthesis. Synthesizes alpha-1,4-glucan chains using ADP-glucose. In Bacillus cereus (strain ATCC 14579 / DSM 31 / CCUG 7414 / JCM 2152 / NBRC 15305 / NCIMB 9373 / NCTC 2599 / NRRL B-3711), this protein is Glycogen synthase.